The primary structure comprises 131 residues: Small ribosomal subunit protein uS11 (131 aa).

This sequence belongs to the universal ribosomal protein uS11 family. Part of the 30S ribosomal subunit. Interacts with proteins S7 and S18. Binds to IF-3.

Located on the platform of the 30S subunit, it bridges several disparate RNA helices of the 16S rRNA. Forms part of the Shine-Dalgarno cleft in the 70S ribosome. The polypeptide is Small ribosomal subunit protein uS11 (Saccharophagus degradans (strain 2-40 / ATCC 43961 / DSM 17024)).